Consider the following 243-residue polypeptide: Phosphatidylserine decarboxylase proenzyme (243 aa).

The Schiff-base intermediate with substrate; via pyruvic acid role is filled by S212. The residue at position 212 (S212) is a Pyruvic acid (Ser); by autocatalysis.

This sequence belongs to the phosphatidylserine decarboxylase family. PSD-A subfamily. In terms of assembly, heterodimer of a large membrane-associated beta subunit and a small pyruvoyl-containing alpha subunit. Pyruvate is required as a cofactor. Is synthesized initially as an inactive proenzyme. Formation of the active enzyme involves a self-maturation process in which the active site pyruvoyl group is generated from an internal serine residue via an autocatalytic post-translational modification. Two non-identical subunits are generated from the proenzyme in this reaction, and the pyruvate is formed at the N-terminus of the alpha chain, which is derived from the carboxyl end of the proenzyme. The post-translation cleavage follows an unusual pathway, termed non-hydrolytic serinolysis, in which the side chain hydroxyl group of the serine supplies its oxygen atom to form the C-terminus of the beta chain, while the remainder of the serine residue undergoes an oxidative deamination to produce ammonia and the pyruvoyl prosthetic group on the alpha chain.

The protein localises to the cell membrane. It carries out the reaction a 1,2-diacyl-sn-glycero-3-phospho-L-serine + H(+) = a 1,2-diacyl-sn-glycero-3-phosphoethanolamine + CO2. Its pathway is phospholipid metabolism; phosphatidylethanolamine biosynthesis; phosphatidylethanolamine from CDP-diacylglycerol: step 2/2. Catalyzes the formation of phosphatidylethanolamine (PtdEtn) from phosphatidylserine (PtdSer). This chain is Phosphatidylserine decarboxylase proenzyme, found in Mycobacterium leprae (strain Br4923).